The following is a 156-amino-acid chain: Ribosomal RNA large subunit methyltransferase H (156 aa).

S-adenosyl-L-methionine contacts are provided by residues Leu73, Gly104, and 123-128 (LSPLTL).

Belongs to the RNA methyltransferase RlmH family. In terms of assembly, homodimer.

Its subcellular location is the cytoplasm. It carries out the reaction pseudouridine(1915) in 23S rRNA + S-adenosyl-L-methionine = N(3)-methylpseudouridine(1915) in 23S rRNA + S-adenosyl-L-homocysteine + H(+). Specifically methylates the pseudouridine at position 1915 (m3Psi1915) in 23S rRNA. This chain is Ribosomal RNA large subunit methyltransferase H, found in Yersinia pseudotuberculosis serotype O:1b (strain IP 31758).